Reading from the N-terminus, the 372-residue chain is Flagellar P-ring protein (372 aa).

The N-terminal stretch at 1–26 is a signal peptide; sequence MNLSSLPFRLLAAAVALCAIAAPASA.

Belongs to the FlgI family. The basal body constitutes a major portion of the flagellar organelle and consists of four rings (L,P,S, and M) mounted on a central rod.

It is found in the periplasm. The protein resides in the bacterial flagellum basal body. Its function is as follows. Assembles around the rod to form the L-ring and probably protects the motor/basal body from shearing forces during rotation. This Xanthomonas axonopodis pv. citri (strain 306) protein is Flagellar P-ring protein.